We begin with the raw amino-acid sequence, 387 residues long: 3-dehydroquinate synthase (387 aa).

This sequence belongs to the archaeal-type DHQ synthase family.

The catalysed reaction is 2-amino-2,3,7-trideoxy-D-lyxo-hept-6-ulosonate + NAD(+) + H2O = 3-dehydroquinate + NH4(+) + NADH + H(+). In terms of biological role, catalyzes the oxidative deamination and cyclization of 2-amino-3,7-dideoxy-D-threo-hept-6-ulosonic acid (ADH) to yield 3-dehydroquinate (DHQ), which is fed into the canonical shikimic pathway of aromatic amino acid biosynthesis. This Halobacterium salinarum (strain ATCC 29341 / DSM 671 / R1) protein is 3-dehydroquinate synthase.